The primary structure comprises 219 residues: Charged multivesicular body protein 5 (219 aa).

A coiled-coil region spans residues 22–153; the sequence is TNVDGRAESI…EIQEALSRSY (132 aa).

It belongs to the SNF7 family. As to quaternary structure, probable peripherally associated component of the endosomal sorting required for transport complex III (ESCRT-III).

The protein localises to the cytoplasm. The protein resides in the cytosol. Its subcellular location is the endosome membrane. Probable peripherally associated component of the endosomal sorting required for transport complex III (ESCRT-III) which is involved in multivesicular bodies (MVBs) formation and sorting of endosomal cargo proteins into MVBs. MVBs contain intraluminal vesicles (ILVs) that are generated by invagination and scission from the limiting membrane of the endosome and mostly are delivered to lysosomes enabling degradation of membrane proteins, such as stimulated growth factor receptors, lysosomal enzymes and lipids. In Xenopus laevis (African clawed frog), this protein is Charged multivesicular body protein 5 (chmp5).